Here is a 366-residue protein sequence, read N- to C-terminus: Ribonuclease P protein subunit drpp30 (366 aa).

The segment at 265–366 is disordered; it reads EDTQPTNNNI…DIDNNKRKRE (102 aa). Over residues 275 to 290 the composition is skewed to basic and acidic residues; it reads PHEKHINKESTGKETI. Composition is skewed to low complexity over residues 291 to 324 and 333 to 351; these read PKPT…TPSI and TAKS…AQKQ. Positions 352–366 are enriched in basic and acidic residues; the sequence is GKMDIDIDNNKRKRE.

It belongs to the eukaryotic/archaeal RNase P protein component 3 family.

The protein localises to the nucleus. It catalyses the reaction Endonucleolytic cleavage of RNA, removing 5'-extranucleotides from tRNA precursor.. Component of ribonuclease P, a protein complex that generates mature tRNA molecules by cleaving their 5'-ends. The polypeptide is Ribonuclease P protein subunit drpp30 (drpp30) (Dictyostelium discoideum (Social amoeba)).